We begin with the raw amino-acid sequence, 196 residues long: Regulator of G-protein signaling 1 (196 aa).

Positions 1–27 (MPGMFFSANPKDLKGTDQSLLDDKTQK) are disordered. Residues 11 to 25 (KDLKGTDQSLLDDKT) show a composition bias toward basic and acidic residues. An RGS domain is found at 72–187 (SLEKLLANQT…LKSNIYLNLL (116 aa)).

In terms of assembly, interacts with GNAI1 and GNAQ.

It localises to the cell membrane. Its subcellular location is the cytoplasm. The protein localises to the cytosol. Regulates G protein-coupled receptor signaling cascades, including signaling downstream of the N-formylpeptide chemoattractant receptors and leukotriene receptors. Inhibits B cell chemotaxis toward CXCL12. Inhibits signal transduction by increasing the GTPase activity of G protein alpha subunits, thereby driving them into their inactive GDP-bound form. This Equus caballus (Horse) protein is Regulator of G-protein signaling 1 (RGS1).